A 148-amino-acid polypeptide reads, in one-letter code: Lysozyme C-3 (148 aa).

The N-terminal stretch at 1 to 18 (MKTLLVLALLLLSVSVQA) is a signal peptide. The C-type lysozyme domain maps to 19-148 (KVYDRCEFAR…VSQYIRGCKL (130 aa)). Intrachain disulfides connect Cys-24–Cys-146, Cys-48–Cys-134, Cys-83–Cys-99, and Cys-95–Cys-113. Residues Glu-53 and Asp-71 contribute to the active site.

This sequence belongs to the glycosyl hydrolase 22 family. Monomer.

It is found in the secreted. The enzyme catalyses Hydrolysis of (1-&gt;4)-beta-linkages between N-acetylmuramic acid and N-acetyl-D-glucosamine residues in a peptidoglycan and between N-acetyl-D-glucosamine residues in chitodextrins.. In terms of biological role, lysozymes have primarily a bacteriolytic function; those in tissues and body fluids are associated with the monocyte-macrophage system and enhance the activity of immunoagents. This is Lysozyme C-3 from Sus scrofa (Pig).